We begin with the raw amino-acid sequence, 426 residues long: MKRDDLIFDIIEKEHQRQLKGIELIASENFVSDQVMQAMGSCLTNKYAEGYPGKRYYGGCEVVDQSEQIAIDRLKQIFGAEWANVQPHSGAQANAAVFLAVLNPGDKFMGLNLAHGGHLSHGSLVNTSGIIYTPCEYNLNKETGRVDYDQMEEIALREKPKMIIGGGSAYSREWDYKRMREIADKVGAILMIDMAHPAGLIAAGLLDNPVKYAHIVTSTTHKTLRGPRGGVIMMGKDFPNPWGKKTPKGEIKMMSQLLDSAVFPGIQGGPLEHVIAAKAVAFGECLQPEYKEYQTQVKKNAAVLAQALIDRGFTIVSGGTDNHSMLVDLRTKYPDLTGKVAEKALVAADITVNKNMVPFDSRSAFQTSGIRLGTPAITTRGAKEDLMLEIAEMIETVLSNVDNEEVIAQVRARVNETMKKYPIFAY.

Residues L113 and 117–119 (GHL) each bind (6S)-5,6,7,8-tetrahydrofolate. The residue at position 222 (K222) is an N6-(pyridoxal phosphate)lysine. Residue 363 to 365 (SAF) participates in (6S)-5,6,7,8-tetrahydrofolate binding.

Belongs to the SHMT family. Homodimer. Pyridoxal 5'-phosphate serves as cofactor.

It is found in the cytoplasm. It carries out the reaction (6R)-5,10-methylene-5,6,7,8-tetrahydrofolate + glycine + H2O = (6S)-5,6,7,8-tetrahydrofolate + L-serine. Its pathway is one-carbon metabolism; tetrahydrofolate interconversion. It participates in amino-acid biosynthesis; glycine biosynthesis; glycine from L-serine: step 1/1. Its function is as follows. Catalyzes the reversible interconversion of serine and glycine with tetrahydrofolate (THF) serving as the one-carbon carrier. This reaction serves as the major source of one-carbon groups required for the biosynthesis of purines, thymidylate, methionine, and other important biomolecules. Also exhibits THF-independent aldolase activity toward beta-hydroxyamino acids, producing glycine and aldehydes, via a retro-aldol mechanism. In Phocaeicola vulgatus (strain ATCC 8482 / DSM 1447 / JCM 5826 / CCUG 4940 / NBRC 14291 / NCTC 11154) (Bacteroides vulgatus), this protein is Serine hydroxymethyltransferase.